A 649-amino-acid chain; its full sequence is Transcription factor E2-alpha (649 aa).

Disordered stretches follow at residues 34 to 107, 127 to 206, 222 to 267, 291 to 325, and 339 to 382; these read GKGR…SERS, LPGE…SAKT, LHPS…GLQQ, SAAP…SSSG, and DHSS…DGGL. Polar residues-rich tracts occupy residues 56–76 and 85–94; these read SSGS…SRTY and SHNSLPSSTF. Residues 127-143 are compositionally biased toward low complexity; the sequence is LPGELGLSSPGPLSPSG. Phosphoserine occurs at positions 135 and 140. Residues 145-156 are compositionally biased toward polar residues; it reads KSGSQYYPSYPS. Residues 171-177 carry the Nuclear localization signal motif; sequence SKKVRKV. 2 stretches are compositionally biased toward low complexity: residues 182-193 and 242-259; these read PSSVYPSSSGDS and GDGS…SVGS. A compositionally biased stretch (low complexity) spans 339 to 352; it reads DHSSNNFSPSPSTP. The residue at position 351 (T351) is a Phosphothreonine. S355 carries the post-translational modification Phosphoserine. R367 is subject to Omega-N-methylarginine. Residue S375 is modified to Phosphoserine. Residues 385–420 are leucine-zipper; it reads LSKMEDRLDEAIHVLRSHAVGTASDLHGLLPGHGAL. A disordered region spans residues 431 to 547; that stretch reads GGRHAGLVGG…KAEREKERRV (117 aa). Residues 448-469 show a composition bias toward polar residues; that stretch reads TSGTSLLHTHASLPSQASSLPD. A Glycyl lysine isopeptide (Lys-Gly) (interchain with G-Cter in SUMO2) cross-link involves residue K494. The residue at position 524 (S524) is a Phosphoserine. E529 carries the post-translational modification Phosphothreonine. Residues 537-547 show a composition bias toward basic and acidic residues; the sequence is QKAEREKERRV. The region spanning 544–597 is the bHLH domain; that stretch reads ERRVANNARERLRVRDINEAFKELGRMCQLHLSSEKPQTKLLILHQAVAVILSL. A Glycyl lysine isopeptide (Lys-Gly) (interchain with G-Cter in SUMO2) cross-link involves residue K620.

As to quaternary structure, homodimer. Heterodimer; efficient DNA binding requires dimerization with another bHLH protein. Forms a heterodimer with TWIST1 and TWIST2. Forms a heterodimer with NEUROD1; the heterodimer is inhibited in presence of ID2, but not NR0B2, to E-box element. Forms a heterodimer with TCF15; the heterodimer binds E-box element. Forms a heterodimer with MYOG; heterodimerization enhances MYOG DNA-binding and transcriptional activities. Forms a heterodimer with ATOH8; repress transcription of TCF3 and TCF3-NEUROG3 dimer-induced transactivation of E box-dependent promoters. Component of a nuclear TAL-1 complex composed at least of CBFA2T3, LDB1, TAL1 and TCF3. Interacts with NEUROD2. Interacts with EP300. Interacts with PTF1A, TGFB1I1 and UBE2I. Interacts with BHLHA9. Interacts with ASB2; the interaction is mediated by SKP2 and targets TCF3 for Notch-induced proteasomal degradation. Interacts with transcription factor ASCL5/AmeloD. In terms of assembly, interacts with RALGAPA1. Interacts with FIGLA. Forms a heterodimer with ATOH7; required for ATOH7 DNA-binding. In terms of processing, phosphorylated following NGF stimulation. Undergoes Notch-induced ubiquitination and subsequent proteasomal degradation which is mediated by ASB1 or ASB2, the substrate-recognition components of probable ECS E3 ubiquitin-protein ligase complexes.

It localises to the nucleus. In terms of biological role, transcriptional regulator. Involved in the initiation of neuronal differentiation and mesenchymal to epithelial transition. Heterodimers between TCF3 and tissue-specific basic helix-loop-helix (bHLH) proteins play major roles in determining tissue-specific cell fate during embryogenesis, like muscle or early B-cell differentiation. Together with TCF15, required for the mesenchymal to epithelial transition. Dimers bind DNA on E-box motifs: 5'-CANNTG-3'. Binds to the kappa-E2 site in the kappa immunoglobulin gene enhancer. Binds to IEB1 and IEB2, which are short DNA sequences in the insulin gene transcription control region. Functionally, facilitates ATOH7 binding to DNA at the consensus sequence 5'-CAGGTG-3', and positively regulates transcriptional activity. This Mesocricetus auratus (Golden hamster) protein is Transcription factor E2-alpha (TCF3).